Here is a 248-residue protein sequence, read N- to C-terminus: Isoprenyl transferase (248 aa).

Residue Asp-23 is part of the active site. Residue Asp-23 participates in Mg(2+) binding. Substrate-binding positions include 24–27 (GNGR), Trp-28, Arg-36, His-40, and 68–70 (STE). Residue Asn-71 is the Proton acceptor of the active site. Residues Trp-72, Arg-74, Arg-185, and 191–193 (RIS) contribute to the substrate site. Position 204 (Glu-204) interacts with Mg(2+).

It belongs to the UPP synthase family. As to quaternary structure, homodimer. Mg(2+) serves as cofactor.

Catalyzes the condensation of isopentenyl diphosphate (IPP) with allylic pyrophosphates generating different type of terpenoids. This Neisseria gonorrhoeae (strain ATCC 700825 / FA 1090) protein is Isoprenyl transferase.